Here is a 554-residue protein sequence, read N- to C-terminus: Transcription factor 7-like 1-A (554 aa).

The span at 1 to 11 shows a compositional bias: gly residues; the sequence is MPQLNSGGGDE. Residues 1-61 form an interaction with CTNNB1-A region; sequence MPQLNSGGGD…SENHSSDSDS (61 aa). Disordered regions lie at residues 1 to 73, 183 to 213, and 391 to 475; these read MPQL…REAF, GTPPGHLSPEIDPKTGIPRPPHPSELSPYYP, and WSAR…LTTK. 2 stretches are compositionally biased toward basic and acidic residues: residues 17–32 and 52–73; these read ELIRFKDEGEQEEKSP and SENHSSDSDSEVERRPPPREAF. Residues 109–312 are interaction with AES and TLE4-A; sequence LGGHYLPNGA…SPNLHTKSNM (204 aa). The HMG box DNA-binding region spans 324–392; the sequence is IKKPLNAFML…LHSQLYPSWS (69 aa). Positions 407-416 are enriched in basic and acidic residues; the sequence is KQSPEMETHT. Residues 408 to 554 are interaction with CTBP-B; the sequence is QSPEMETHTK…PLSLVTKSSD (147 aa). Over residues 445–464 the composition is skewed to low complexity; sequence SPATPSAALASPAAPAATHS. Residues 465–474 are compositionally biased toward polar residues; that stretch reads EQAQPLSLTT.

Belongs to the TCF/LEF family. In terms of assembly, interacts with csnk1e, ctnnb1-A, ctbp-B, dact1-A and gsk3b. May interact with ase and tle4-A. Post-translationally, phosphorylated. Phosphorylation by csnk1e promotes binding to ctnnb1-A while phosphorylation by gsk3b may reverse this effect.

The protein resides in the cytoplasm. Its subcellular location is the nucleus. In terms of biological role, participates in the Wnt signaling pathway. Binds to DNA and acts as a repressor in the absence of ctnnb1-A and possibly ctnnb1-B, and as an activator in the presence of these proteins. Required early in development for the establishment of the dorsal body axis in response to maternal Wnt signaling. Also required during development of the CNS for the establishment of dorsal-ventral patterning in the prospective diencephalon. The sequence is that of Transcription factor 7-like 1-A (tcf7l1-a) from Xenopus laevis (African clawed frog).